The following is a 188-amino-acid chain: Elongation factor P (188 aa).

It belongs to the elongation factor P family.

Its subcellular location is the cytoplasm. The protein operates within protein biosynthesis; polypeptide chain elongation. Its function is as follows. Involved in peptide bond synthesis. Stimulates efficient translation and peptide-bond synthesis on native or reconstituted 70S ribosomes in vitro. Probably functions indirectly by altering the affinity of the ribosome for aminoacyl-tRNA, thus increasing their reactivity as acceptors for peptidyl transferase. This chain is Elongation factor P, found in Nitrosospira multiformis (strain ATCC 25196 / NCIMB 11849 / C 71).